Here is a 267-residue protein sequence, read N- to C-terminus: 14-3-3-like protein GF14 chi (267 aa).

An N-acetylalanine modification is found at A2. Phosphoserine occurs at positions 72 and 195. The residue at position 216 (T216) is a Phosphothreonine. S267 carries the phosphoserine modification.

This sequence belongs to the 14-3-3 family. Interacts with TPK1. Interacts with the isocitrate dehydrogenase IDH3, and malate dehydrogenases MDH1 and MDH2. Interacts with DREB1A and DREB1B in the nucleus. Interacts with CINV1.

Its subcellular location is the nucleus. The protein localises to the cytoplasm. Is associated with a DNA binding complex that binds to the G box, a well-characterized cis-acting DNA regulatory element found in plant genes. Involved in the regulation of nutrient metabolism. The polypeptide is 14-3-3-like protein GF14 chi (GRF1) (Arabidopsis thaliana (Mouse-ear cress)).